A 498-amino-acid chain; its full sequence is Envelope glycoprotein G (498 aa).

The signal sequence occupies residues 1–20; that stretch reads MKWATWILALGLLVVRTVVA. N-linked (GlcNAc...) asparagine; by host glycans are attached at residues N56, N86, N142, and N226. Tandem repeats lie at residues 271 to 292 and 308 to 329. A 2 X 22 AA repeats of E-E-[DE]-[AE]-E-L-T-S-S-D-L-D-N-I-E-I-E-V-V-G-S-P region spans residues 271–329; it reads EEEAELTSSDLDNIEIEVVGSPAAPAEGPATEEGRGAEEDEELTSSDLDNIEIEVVGSP. Residues 290-377 are disordered; sequence GSPAAPAEGP…HRLPPEPTFV (88 aa). The segment covering 292 to 301 has biased composition (low complexity); sequence PAAPAEGPAT. Residues 308–322 are compositionally biased toward acidic residues; the sequence is EEDEELTSSDLDNIE. The segment covering 329–342 has biased composition (pro residues); sequence PRPPASSPPPPPPR. The segment covering 346–364 has biased composition (basic and acidic residues); sequence RGRDHDHDHGHHRADDRGP. N-linked (GlcNAc...) asparagine; by host glycosylation occurs at N443. Residues 463–483 traverse the membrane as a helical segment; sequence VALAGLVVVGIVIMCLHMAII.

It belongs to the alphaherpesvirinae glycoprotein G family.

The protein localises to the virion membrane. Functionally, chemokine-binding protein that inhibits neutrophils' chemotaxis. The chain is Envelope glycoprotein G (gG) from Sus scrofa (Pig).